Reading from the N-terminus, the 498-residue chain is 3-octaprenyl-4-hydroxybenzoate carboxy-lyase (498 aa).

Mn(2+) is bound at residue N177. Prenylated FMN-binding positions include I180–R182, R194–L196, and R199–G200. E243 contacts Mn(2+). D292 (proton donor) is an active-site residue.

It belongs to the UbiD family. As to quaternary structure, homohexamer. Requires prenylated FMN as cofactor. It depends on Mn(2+) as a cofactor.

Its subcellular location is the cell membrane. The enzyme catalyses a 4-hydroxy-3-(all-trans-polyprenyl)benzoate + H(+) = a 2-(all-trans-polyprenyl)phenol + CO2. The protein operates within cofactor biosynthesis; ubiquinone biosynthesis. Catalyzes the decarboxylation of 3-octaprenyl-4-hydroxy benzoate to 2-octaprenylphenol, an intermediate step in ubiquinone biosynthesis. In Methylococcus capsulatus (strain ATCC 33009 / NCIMB 11132 / Bath), this protein is 3-octaprenyl-4-hydroxybenzoate carboxy-lyase.